Reading from the N-terminus, the 199-residue chain is MQYPLPIARLIDSFMKLPGIGEKTATRLAFYAMDMPKEDVDEFAQALVDVKEKLRQCSVCGNITEQDPCAICSNPVRDRSTIMVVEEAKDVMAFENMGEYDGLYHVLHGVLSPMDGIGPEQINIKSLIVRLQKNDAAKEVILALNSTPEGESTAMYISRLIKPAGLKVTRLAAGLAVGSDIEYANLITLKRAVQGRTEL.

A C4-type zinc finger spans residues cysteine 57–cysteine 72. The 97-residue stretch at serine 80 to alanine 176 folds into the Toprim domain.

The protein belongs to the RecR family.

May play a role in DNA repair. It seems to be involved in an RecBC-independent recombinational process of DNA repair. It may act with RecF and RecO. The polypeptide is Recombination protein RecR (Lactobacillus delbrueckii subsp. bulgaricus (strain ATCC BAA-365 / Lb-18)).